A 159-amino-acid chain; its full sequence is uncharacterized protein (159 aa).

The next 3 membrane-spanning stretches (helical) occupy residues 17-37 (FFFF…NLSS), 44-64 (WLIV…PLPI), and 67-87 (FSGA…DLIA).

It localises to the membrane. This is an uncharacterized protein from Saccharomyces cerevisiae (strain ATCC 204508 / S288c) (Baker's yeast).